A 108-amino-acid chain; its full sequence is Phosphoribosyl-ATP pyrophosphatase (108 aa).

The protein belongs to the PRA-PH family.

It is found in the cytoplasm. It catalyses the reaction 1-(5-phospho-beta-D-ribosyl)-ATP + H2O = 1-(5-phospho-beta-D-ribosyl)-5'-AMP + diphosphate + H(+). The protein operates within amino-acid biosynthesis; L-histidine biosynthesis; L-histidine from 5-phospho-alpha-D-ribose 1-diphosphate: step 2/9. This is Phosphoribosyl-ATP pyrophosphatase from Trichlorobacter lovleyi (strain ATCC BAA-1151 / DSM 17278 / SZ) (Geobacter lovleyi).